Reading from the N-terminus, the 196-residue chain is NADPH:quinone oxidoreductase (196 aa).

This sequence belongs to the SsuE family. Homotetramer. It depends on FMN as a cofactor.

The protein localises to the cell membrane. The catalysed reaction is a quinone + NADH + H(+) = a quinol + NAD(+). It catalyses the reaction a quinone + NADPH + H(+) = a quinol + NADP(+). The enzyme apparently serves as a quinone reductase in connection with conjugation reactions of hydroquinones involved in detoxification pathways. The sequence is that of NADPH:quinone oxidoreductase (NQR) from Arabidopsis thaliana (Mouse-ear cress).